Consider the following 971-residue polypeptide: 116 kDa U5 small nuclear ribonucleoprotein component (971 aa).

Met1 carries the post-translational modification N-acetylmethionine. The disordered stretch occupies residues Met1–Pro52. A compositionally biased stretch (acidic residues) spans Leu17–His47. Ser19 is modified (phosphoserine). Residue Lys63 forms a Glycyl lysine isopeptide (Lys-Gly) (interchain with G-Cter in SUMO1); alternate linkage. A Glycyl lysine isopeptide (Lys-Gly) (interchain with G-Cter in SUMO2); alternate cross-link involves residue Lys63. Position 85 is a phosphothreonine (Thr85). One can recognise a tr-type G domain in the interval Glu126–Lys408. GTP contacts are provided by residues Gly135–Thr142, Asp203–His207, and Asn257–Asp260.

This sequence belongs to the TRAFAC class translation factor GTPase superfamily. Classic translation factor GTPase family. EF-G/EF-2 subfamily. In terms of assembly, component of the U5 snRNP and the U4/U6-U5 tri-snRNP complex, a building block of the spliceosome. The U4/U6-U5 tri-snRNP complex is composed of the U4, U6 and U5 snRNAs and at least PRPF3, PRPF4, PRPF6, PRPF8, PRPF31, SNRNP200, TXNL4A, SNRNP40, DDX23, CD2BP2, PPIH, SNU13, EFTUD2, SART1 and USP39. Component of the pre-catalytic, catalytic and post-catalytic spliceosome complexes. Component of the minor spliceosome, which splices U12-type introns. Within this complex, interacts with CRIPT. Interacts with ERBB4 and PRPF8. Interacts with PIH1D1. Interacts with RPAP3 and URI1 in a ZNHIT2-dependent manner. Interacts with NRDE2. Interacts with FAM50A. Interacts with UBL5.

The protein localises to the nucleus. Required for pre-mRNA splicing as component of the spliceosome, including pre-catalytic, catalytic and post-catalytic spliceosomal complexes. Component of the U5 snRNP and the U4/U6-U5 tri-snRNP complex, a building block of the spliceosome. As a component of the minor spliceosome, involved in the splicing of U12-type introns in pre-mRNAs. The sequence is that of 116 kDa U5 small nuclear ribonucleoprotein component (Eftud2) from Mus musculus (Mouse).